The following is a 239-amino-acid chain: Leucine-rich repeat-containing protein 57 (239 aa).

Gly-2 carries the N-myristoyl glycine lipid modification. LRR repeat units follow at residues 39–60 (NLRT…LIGK), 63–84 (LLKS…ICNL), 86–107 (KLET…FGQL), 109–131 (ALKT…CSLR), 132–153 (HLDV…VGEL), 154–175 (QVIE…ISCC), 177–197 (RLKI…PQSI), and 202–222 (QICL…RELE).

Its subcellular location is the membrane. This is Leucine-rich repeat-containing protein 57 (LRRC57) from Homo sapiens (Human).